The chain runs to 203 residues: Small ribosomal subunit protein uS4 (203 aa).

The 64-residue stretch at 93–156 folds into the S4 RNA-binding domain; it reads RRLDNVVYRL…AKVPAILEAV (64 aa).

The protein belongs to the universal ribosomal protein uS4 family. As to quaternary structure, part of the 30S ribosomal subunit. Contacts protein S5. The interaction surface between S4 and S5 is involved in control of translational fidelity.

Its function is as follows. One of the primary rRNA binding proteins, it binds directly to 16S rRNA where it nucleates assembly of the body of the 30S subunit. In terms of biological role, with S5 and S12 plays an important role in translational accuracy. This is Small ribosomal subunit protein uS4 from Streptococcus thermophilus (strain CNRZ 1066).